Consider the following 238-residue polypeptide: ATP synthase subunit a (238 aa).

5 consecutive transmembrane segments (helical) span residues 15–35, 76–96, 111–131, 167–187, and 208–230; these read IFNL…FVFI, YSLF…LGLM, PTAN…LTHI, LALR…LLLL, and AFSV…VYLG.

This sequence belongs to the ATPase A chain family. In terms of assembly, F-type ATPases have 2 components, CF(1) - the catalytic core - and CF(0) - the membrane proton channel. CF(1) has five subunits: alpha(3), beta(3), gamma(1), delta(1), epsilon(1). CF(0) has three main subunits: a(1), b(2) and c(9-12). The alpha and beta chains form an alternating ring which encloses part of the gamma chain. CF(1) is attached to CF(0) by a central stalk formed by the gamma and epsilon chains, while a peripheral stalk is formed by the delta and b chains.

It is found in the cell membrane. Key component of the proton channel; it plays a direct role in the translocation of protons across the membrane. The protein is ATP synthase subunit a of Streptococcus pneumoniae (strain ATCC BAA-255 / R6).